The sequence spans 462 residues: Ribosomal protein uS12 methylthiotransferase RimO (462 aa).

An MTTase N-terminal domain is found at 22-133; the sequence is ASVAFLHLGC…IIEVLQRVRQ (112 aa). Residues C31, C67, C96, C171, C175, and C178 each contribute to the [4Fe-4S] cluster site. One can recognise a Radical SAM core domain in the interval 157–386; sequence TTGRFVSYLK…VAIQQPISAA (230 aa). One can recognise a TRAM domain in the interval 389–460; it reads QALIGQTVDV…LYDLTGEINH (72 aa).

Belongs to the methylthiotransferase family. RimO subfamily. Requires [4Fe-4S] cluster as cofactor.

Its subcellular location is the cytoplasm. It carries out the reaction L-aspartate(89)-[ribosomal protein uS12]-hydrogen + (sulfur carrier)-SH + AH2 + 2 S-adenosyl-L-methionine = 3-methylsulfanyl-L-aspartate(89)-[ribosomal protein uS12]-hydrogen + (sulfur carrier)-H + 5'-deoxyadenosine + L-methionine + A + S-adenosyl-L-homocysteine + 2 H(+). Catalyzes the methylthiolation of an aspartic acid residue of ribosomal protein uS12. This is Ribosomal protein uS12 methylthiotransferase RimO from Prochlorococcus marinus (strain MIT 9211).